Consider the following 77-residue polypeptide: Large ribosomal subunit protein uL29 (77 aa).

Belongs to the universal ribosomal protein uL29 family.

This chain is Large ribosomal subunit protein uL29, found in Mycolicibacterium vanbaalenii (strain DSM 7251 / JCM 13017 / BCRC 16820 / KCTC 9966 / NRRL B-24157 / PYR-1) (Mycobacterium vanbaalenii).